Here is a 565-residue protein sequence, read N- to C-terminus: Arginine--tRNA ligase (565 aa).

The 'HIGH' region motif lies at 128-138 (ANPTGPLHVGH).

The protein belongs to the class-I aminoacyl-tRNA synthetase family. In terms of assembly, monomer.

Its subcellular location is the cytoplasm. The catalysed reaction is tRNA(Arg) + L-arginine + ATP = L-arginyl-tRNA(Arg) + AMP + diphosphate. This Delftia acidovorans (strain DSM 14801 / SPH-1) protein is Arginine--tRNA ligase.